The following is a 190-amino-acid chain: Large ribosomal subunit protein bL25 (190 aa).

It belongs to the bacterial ribosomal protein bL25 family. CTC subfamily. In terms of assembly, part of the 50S ribosomal subunit; part of the 5S rRNA/L5/L18/L25 subcomplex. Contacts the 5S rRNA. Binds to the 5S rRNA independently of L5 and L18.

In terms of biological role, this is one of the proteins that binds to the 5S RNA in the ribosome where it forms part of the central protuberance. The polypeptide is Large ribosomal subunit protein bL25 (Neisseria meningitidis serogroup C / serotype 2a (strain ATCC 700532 / DSM 15464 / FAM18)).